A 382-amino-acid chain; its full sequence is Gap junction alpha-1 protein (382 aa).

Residues 2 to 23 (GDWSALGKLLDKVQAYSTAGGK) are Cytoplasmic-facing. Serine 5 bears the Phosphoserine mark. The chain crosses the membrane as a helical span at residues 24-44 (VWLSVLFIFRILLLGTAVESA). Topologically, residues 45–76 (WGDEQSAFRCNTQQPGCENVCYDKSFPISHVR) are extracellular. Cystine bridges form between cysteine 54–cysteine 192 and cysteine 187–cysteine 198. The helical transmembrane segment at 77-97 (FWVLQIIFVSVPTLLYLAHVF) threads the bilayer. The Cytoplasmic portion of the chain corresponds to 98–155 (YVMRKEEKLNKKEEELKVAQTDGVNVEMHLKQIEIKKFKYGIEEHGKVKMRGGLLRTY). A Glycyl lysine isopeptide (Lys-Gly) (interchain with G-Cter in SUMO) cross-link involves residue lysine 144. The helical transmembrane segment at 156–176 (IISILFKSVFEVAFLLIQWYI) threads the bilayer. Residues 177–207 (YGFSLSAVYTCKRDPCPHQVDCFLSRPTEKT) are Extracellular-facing. A helical transmembrane segment spans residues 208–228 (IFIIFMLVVSLVSLALNIIEL). Over 229–382 (FYVFFKGVKD…SRPRPDDLEI (154 aa)) the chain is Cytoplasmic. A Glycyl lysine isopeptide (Lys-Gly) (interchain with G-Cter in SUMO) cross-link involves residue lysine 237. The interaction with NOV stretch occupies residues 244–382 (SDPYHATTGP…SRPRPDDLEI (139 aa)). Tyrosine 247 is subject to Phosphotyrosine. Phosphoserine occurs at positions 255, 257, and 262. The tract at residues 264 to 382 (KYAYFNGCSS…SRPRPDDLEI (119 aa)) is interaction with UBQLN4. Residue cysteine 271 is modified to S-nitrosocysteine. Threonine 275 carries the post-translational modification Phosphothreonine. A phosphoserine mark is found at serine 306 and serine 314. Residues 317-332 (QNRMGQAGSTISNSHA) show a composition bias toward polar residues. The segment at 317 to 382 (QNRMGQAGST…SRPRPDDLEI (66 aa)) is disordered. A Phosphoserine; by CK1 modification is found at serine 325. Threonine 326 is modified (phosphothreonine). A phosphoserine; by CK1 mark is found at serine 328 and serine 330. A phosphoserine mark is found at serine 344 and serine 365. Residues 362–374 (RPSSRASSRASSR) are compositionally biased toward low complexity. At serine 368 the chain carries Phosphoserine; by PKC/PRKCG and PKC/PRKCD. Residues serine 369 and serine 373 each carry the phosphoserine modification.

It belongs to the connexin family. Alpha-type (group II) subfamily. As to quaternary structure, a connexon is composed of a hexamer of connexins. Interacts with SGSM3. Interacts with RIC1/CIP150. Interacts with CNST and CSNK1D. Interacts (via C-terminus) with TJP1. Interacts (via C-terminus) with SRC (via SH3 domain). Interacts (not ubiquitinated) with UBQLN4 (via UBA domain). Interacts with NOV. Interacts with TMEM65. Interacts with ANK3/ANKG and PKP2. Phosphorylation at Ser-325, Ser-328 and Ser-330 by CK1 modulates gap junction assembly. Phosphorylated at Ser-368 by PRKCG; phosphorylation induces disassembly of gap junction plaques and inhibition of gap junction activity. Phosphorylation at Ser-368 by PRKCD triggers its internalization into small vesicles leading to proteasome-mediated degradation. Post-translationally, sumoylated with SUMO1, SUMO2 and SUMO3, which may regulate the level of functional Cx43 gap junctions at the plasma membrane. May be desumoylated by SENP1 or SENP2. In terms of processing, S-nitrosylation at Cys-271 is enriched at the muscle endothelial gap junction in arteries, it augments channel permeability and may regulate of smooth muscle cell to endothelial cell communication. Acetylated in the developing cortex; leading to delocalization from the cell membrane.

It localises to the cell membrane. The protein resides in the cell junction. Its subcellular location is the gap junction. It is found in the endoplasmic reticulum. Its function is as follows. Gap junction protein that acts as a regulator of bladder capacity. A gap junction consists of a cluster of closely packed pairs of transmembrane channels, the connexons, through which materials of low MW diffuse from one cell to a neighboring cell. May play a critical role in the physiology of hearing by participating in the recycling of potassium to the cochlear endolymph. Negative regulator of bladder functional capacity: acts by enhancing intercellular electrical and chemical transmission, thus sensitizing bladder muscles to cholinergic neural stimuli and causing them to contract. May play a role in cell growth inhibition through the regulation of NOV expression and localization. Plays an essential role in gap junction communication in the ventricles. This chain is Gap junction alpha-1 protein (GJA1), found in Oryctolagus cuniculus (Rabbit).